A 92-amino-acid polypeptide reads, in one-letter code: Small ribosomal subunit protein uS19 (92 aa).

Belongs to the universal ribosomal protein uS19 family.

Protein S19 forms a complex with S13 that binds strongly to the 16S ribosomal RNA. In Agrobacterium fabrum (strain C58 / ATCC 33970) (Agrobacterium tumefaciens (strain C58)), this protein is Small ribosomal subunit protein uS19.